The primary structure comprises 775 residues: Chloride channel protein CLC-a (775 aa).

Residues 1-28 (MDEDGNLQISNSNYNGEEEGEDPENNTL) form a disordered region. A run of 12 helical transmembrane segments spans residues 88–108 (TLAC…NLAV), 131–151 (GLMV…VLVV), 178–198 (FGFT…AAGL), 206–226 (LVHI…DNHR), 248–268 (GSAS…LFAL), 278–298 (ALLW…RAFI), 328–348 (AADI…GSLY), 371–391 (VLLS…LPFL), 453–473 (MVSL…TFGI), 478–498 (GLFL…GTAM), 510–530 (AVLG…SLCV), and 531–551 (IFLE…VLLI). CBS domains follow at residues 595 to 658 (AKPP…FLNE) and 703 to 768 (TNTT…HLDK). Residues 730 to 750 (HLLVVPKIQASGMSPVIGILT) form a helical membrane-spanning segment.

The protein belongs to the chloride channel (TC 2.A.49) family. Homodimer. Interacts with PP2A5. Broadly expressed in the plant.

It is found in the membrane. Its function is as follows. Voltage-gated chloride channel that could play a role in the regulation of nitrate content. This Arabidopsis thaliana (Mouse-ear cress) protein is Chloride channel protein CLC-a (CLC-A).